A 468-amino-acid chain; its full sequence is Transmembrane protein 151B (468 aa).

The tract at residues 1–25 (MPEDGGGDSGDVPEIIPDGEPLREE) is disordered. 2 consecutive transmembrane segments (helical) span residues 45-65 (CLLLTLLIHACGAVVAWCRLA) and 98-118 (YLYIPLAFVSLLYLLYLAECW). Positions 384–438 (VSSNSLPPARPSGPRLPFSRSRLSLGAGGRATPGVFRSLSGGPLGRRGEDTEPLE) are disordered.

The protein belongs to the TMEM151 family.

Its subcellular location is the membrane. The polypeptide is Transmembrane protein 151B (TMEM151B) (Bos taurus (Bovine)).